Consider the following 183-residue polypeptide: ADP-ribosylation factor 3 (183 aa).

Gly2 carries N-myristoyl glycine lipidation. GTP-binding positions include 24–31 (GLDKAGKT), 67–71 (DVGGQ), and 126–129 (NKQD).

Belongs to the small GTPase superfamily. Arf family. Interacts with RUD3.

The protein resides in the golgi apparatus. Functionally, GTP-binding protein involved in protein trafficking; may modulate vesicle budding and uncoating within the Golgi apparatus. This Saccharomyces cerevisiae (strain ATCC 204508 / S288c) (Baker's yeast) protein is ADP-ribosylation factor 3 (ARF3).